The chain runs to 862 residues: Pentatricopeptide repeat-containing protein At1g74850, chloroplastic (862 aa).

Residues 1 to 66 constitute a chloroplast transit peptide; it reads MNLAIPNPNS…DLVLGNPSVS (66 aa). PPR repeat units follow at residues 104-139, 140-174, 175-209, 210-245, 246-280, 281-315, 316-350, 351-385, 386-420, 421-455, 456-490, 491-525, 526-560, 561-595, and 596-630; these read SLND…WCKP, NEHI…GVSR, SVFS…KISP, SILT…GIQP, DIVT…GIVP, DLTT…GSLP, DITS…GCTP, NANT…NTDP, DAAT…NIEP, DMET…DIVP, SSKA…GSNP, SIET…GIPR, NRDT…RCDP, DERT…DILP, and SIMC…RVSN. A Smr domain is found at 713-801; sequence VDVHRMSEGG…RIMCQRSQLK (89 aa). The disordered stretch occupies residues 831 to 862; the sequence is GTRASTSSDTNHSGNPTQRRTRTKKELAGSTA. Over residues 833-848 the composition is skewed to polar residues; the sequence is RASTSSDTNHSGNPTQ.

Belongs to the PPR family. P subfamily. Mostly expressed in leaves, stems and flowers, but barely in roots.

The protein localises to the plastid. It is found in the chloroplast. Involved in plastid gene expression. This is Pentatricopeptide repeat-containing protein At1g74850, chloroplastic (PTAC2) from Arabidopsis thaliana (Mouse-ear cress).